Here is a 215-residue protein sequence, read N- to C-terminus: Adenylate kinase (215 aa).

ATP is bound at residue 10-15; the sequence is GAGKGT. Residues 30–59 are NMP; sequence STGDMLRAAIKAGTPLGLEAKKIIDEGGLV. AMP contacts are provided by residues Thr31, Arg36, 57 to 59, 85 to 88, and Gln92; these read GLV and GFPR. An LID region spans residues 122-159; sequence GRRVHLASGRTYHVTYNPPKVEGKDDVTGEDLIQRDDD. ATP contacts are provided by residues Arg123 and 132–133; that span reads TY. The AMP site is built by Arg156 and Arg167. Gln200 contacts ATP.

It belongs to the adenylate kinase family. In terms of assembly, monomer.

It is found in the cytoplasm. It catalyses the reaction AMP + ATP = 2 ADP. It participates in purine metabolism; AMP biosynthesis via salvage pathway; AMP from ADP: step 1/1. Its function is as follows. Catalyzes the reversible transfer of the terminal phosphate group between ATP and AMP. Plays an important role in cellular energy homeostasis and in adenine nucleotide metabolism. This chain is Adenylate kinase, found in Neisseria meningitidis serogroup C (strain 053442).